The sequence spans 262 residues: Protein BcsX (262 aa).

It functions in the pathway glycan metabolism; bacterial cellulose biosynthesis. The sequence is that of Protein BcsX (bcsX) from Komagataeibacter xylinus (Gluconacetobacter xylinus).